A 514-amino-acid polypeptide reads, in one-letter code: Cytochrome P450 monooxygenase nodJ (514 aa).

The chain crosses the membrane as a helical span at residues 2–24; sequence ELIVIIITLAFCILLYGTRWRAA. N-linked (GlcNAc...) asparagine glycans are attached at residues asparagine 144, asparagine 245, and asparagine 416. A heme-binding site is contributed by cysteine 432.

The protein belongs to the cytochrome P450 family. The cofactor is heme.

It is found in the membrane. Its pathway is secondary metabolite biosynthesis. Cytochrome P450 monooxygenase; part of the gene cluster that mediates the biosynthesis of the indole diterpenes nodulisporic acids (NA). Nodulisporic acid A (NAA) and its chemically modified derivatives are of particular significance because of their highly potent insecticidal activity against blood-feeding arthropods and lack of observable adverse effects on mammals, in particular the tremogenicity associated with the paspaline-derived IDTs is not observed. The geranylgeranyl diphosphate (GGPP) synthase ggs1, localized outside of the cluster, is proposed to catalyze the first step in nodulisporic acid biosynthesis via conversion of farnesyl pyrophosphate and isopentyl pyrophosphate into geranylgeranyl pyrophosphate (GGPP). Condensation of indole-3-glycerol phosphate with GGPP by the prenyl transferase nodC then forms 3-geranylgeranylindole (3-GGI). Epoxidation by the FAD-dependent monooxygenase nodM leads to a single-epoxidized-GGI that is substrate of the terpene cyclase nodB for cyclization to yield emindole SB. The terminal methyl carbon, C28, of emindole SB is then oxidized by the cytochrome P450 monooxygenase nodW to produce nodulisporic acid F (NAF), the pentacyclic core of NAA. NAF is converted to nodulisporic acid E (NAE) via prenylation. This step is probably performed by one of the indole diterpene prenyltransferases nodD1 or nodD2. Several oxidation steps performed by the FAD-linked oxidoreductase nodO and one of the cytochrome P450 monooxygenase nodR, nodX or nodZ further convert NAE to nodulisporic acid D (NAD). NAD is substrate of cytochrome P450 monooxygenase nodJ to produce the precursor of nodulisporic acid C (NAC), converted to NAC by one of the indole diterpene prenyltransferases nodD1 or nodD2. The FAD-dependent monooxygenase nodY2 then oxidizes NAC to nodulisporic acid B (NAB). Finally NAB is converted to NAA by one of the cytochrome P450 monooxygenases nodR, nodX or nodZ. The polypeptide is Cytochrome P450 monooxygenase nodJ (Hypoxylon pulicicidum).